The sequence spans 245 residues: Balbiani ring A 28 kDa protein (245 aa).

Residues Met1–Ser16 form the signal peptide. 5 positions are modified to phosphoserine: Ser33, Ser40, Ser92, Ser93, and Ser115.

As to expression, salivary gland.

It is found in the secreted. Its function is as follows. Used by the larvae to construct a supramolecular structure, the larval tube. The chain is Balbiani ring A 28 kDa protein from Chironomus thummi thummi (Midge).